Here is an 838-residue protein sequence, read N- to C-terminus: Leucine--tRNA ligase (838 aa).

The 'HIGH' region motif lies at proline 36–histidine 46. The short motif at lysine 611 to serine 615 is the 'KMSKS' region element. Lysine 614 contacts ATP.

Belongs to the class-I aminoacyl-tRNA synthetase family.

The protein resides in the cytoplasm. The enzyme catalyses tRNA(Leu) + L-leucine + ATP = L-leucyl-tRNA(Leu) + AMP + diphosphate. This is Leucine--tRNA ligase from Wolbachia pipientis wMel.